The primary structure comprises 75 residues: Conotoxin Im23.5 (75 aa).

An N-terminal signal peptide occupies residues 1–23 (MKFFTCLLLLLVVLTVVFDNVDA). 3 cysteine pairs are disulfide-bonded: Cys24–Cys28, Cys37–Cys40, and Cys41–Cys43. A propeptide spanning residues 24 to 50 (CDRSCTGVMGHPSCATCCACFTSAGKR) is cleaved from the precursor.

In terms of tissue distribution, expressed by the venom duct.

The protein localises to the secreted. Probable neurotoxin. In Conus imperialis (Imperial cone), this protein is Conotoxin Im23.5.